We begin with the raw amino-acid sequence, 696 residues long: F-box/LRR-repeat protein 5 (696 aa).

The interval 1 to 159 is hemerythrin-like; that stretch reads MAPFPDEVDV…IKKQVIAQHS (159 aa). Fe(3+)-binding residues include His15, His57, Glu58, Glu61, His80, His126, and Glu130. One can recognise an F-box domain in the interval 205 to 251; sequence STHISQLPTEILLCLFRYLGPEDLCHCGQVCSAWSDLAKTGSLWRHL. 6 LRR repeats span residues 343-367, 368-395, 396-421, 582-612, 613-640, and 641-666; these read SSTV…LDLT, QTDV…DLSG, CEKL…TCSE, CSSG…SLSG, CYQV…NLSG, and CLLI…HFYY. The [2Fe-2S] cluster site is built by Cys667, Cys681, Cys691, and Cys692.

In terms of assembly, part of a SCF (SKP1-cullin-F-box) protein ligase complex. The cofactor is [2Fe-2S] cluster. Ubiquitinated upon iron and oxygen depletion, leading to its degradation by the proteasome. Ubiquitination is regulated by the hemerythrin-like region that acts as an oxygen and iron sensor.

The protein localises to the cytoplasm. Its subcellular location is the perinuclear region. It is found in the nucleus. Its pathway is protein modification; protein ubiquitination. In terms of biological role, component of some SCF (SKP1-cullin-F-box) protein ligase complex that plays a central role in iron homeostasis by promoting the ubiquitination and subsequent degradation of ireb2/irp2. Upon high iron and oxygen level, it specifically recognizes and binds ireb2/irp2, promoting its ubiquitination and degradation by the proteasome. The sequence is that of F-box/LRR-repeat protein 5 (fbxl5) from Salmo salar (Atlantic salmon).